We begin with the raw amino-acid sequence, 223 residues long: Deoxyribose-phosphate aldolase 1 (223 aa).

Asp-91 (proton donor/acceptor) is an active-site residue. Catalysis depends on Lys-154, which acts as the Schiff-base intermediate with acetaldehyde. Lys-183 serves as the catalytic Proton donor/acceptor.

Belongs to the DeoC/FbaB aldolase family. DeoC type 1 subfamily.

It is found in the cytoplasm. The catalysed reaction is 2-deoxy-D-ribose 5-phosphate = D-glyceraldehyde 3-phosphate + acetaldehyde. It participates in carbohydrate degradation; 2-deoxy-D-ribose 1-phosphate degradation; D-glyceraldehyde 3-phosphate and acetaldehyde from 2-deoxy-alpha-D-ribose 1-phosphate: step 2/2. Its function is as follows. Catalyzes a reversible aldol reaction between acetaldehyde and D-glyceraldehyde 3-phosphate to generate 2-deoxy-D-ribose 5-phosphate. This chain is Deoxyribose-phosphate aldolase 1, found in Bacillus licheniformis (strain ATCC 14580 / DSM 13 / JCM 2505 / CCUG 7422 / NBRC 12200 / NCIMB 9375 / NCTC 10341 / NRRL NRS-1264 / Gibson 46).